A 120-amino-acid polypeptide reads, in one-letter code: Large ribosomal subunit protein bL12 (120 aa).

This sequence belongs to the bacterial ribosomal protein bL12 family. Homodimer. Part of the ribosomal stalk of the 50S ribosomal subunit. Forms a multimeric L10(L12)X complex, where L10 forms an elongated spine to which 2 to 4 L12 dimers bind in a sequential fashion. Binds GTP-bound translation factors.

In terms of biological role, forms part of the ribosomal stalk which helps the ribosome interact with GTP-bound translation factors. Is thus essential for accurate translation. The protein is Large ribosomal subunit protein bL12 of Listeria innocua serovar 6a (strain ATCC BAA-680 / CLIP 11262).